Here is a 202-residue protein sequence, read N- to C-terminus: Probable cobalt-precorrin-6B C(15)-methyltransferase (decarboxylating) (202 aa).

S-adenosyl-L-methionine contacts are provided by residues Thr-29, 53 to 57 (GCGSG), Asp-77, and Val-106.

This sequence belongs to the methyltransferase superfamily. Archaeal-type CbiT family.

The catalysed reaction is Co-precorrin-6B + S-adenosyl-L-methionine = Co-precorrin-7 + S-adenosyl-L-homocysteine + CO2. It functions in the pathway cofactor biosynthesis; adenosylcobalamin biosynthesis; cob(II)yrinate a,c-diamide from sirohydrochlorin (anaerobic route): step 8/10. Functionally, catalyzes the methylation of C-15 in cobalt-precorrin-6B followed by the decarboxylation of C-12 to form cobalt-precorrin-7. In Thermoplasma acidophilum (strain ATCC 25905 / DSM 1728 / JCM 9062 / NBRC 15155 / AMRC-C165), this protein is Probable cobalt-precorrin-6B C(15)-methyltransferase (decarboxylating).